Here is a 197-residue protein sequence, read N- to C-terminus: Holliday junction branch migration complex subunit RuvA (197 aa).

Residues 1–63 (MYAYLKGIIT…EDAHLLYGFR (63 aa)) are domain I. Residues 64–142 (SEDEKKLFLS…VAGDDLPAKV (79 aa)) form a domain II region. Residues 143-147 (AVQAS) are flexible linker. The interval 148-197 (AENQELEEAMEAMLALGYKATELKKIKKFFEGTTDTAENYIKSALKMLVK) is domain III.

Belongs to the RuvA family. In terms of assembly, homotetramer. Forms an RuvA(8)-RuvB(12)-Holliday junction (HJ) complex. HJ DNA is sandwiched between 2 RuvA tetramers; dsDNA enters through RuvA and exits via RuvB. An RuvB hexamer assembles on each DNA strand where it exits the tetramer. Each RuvB hexamer is contacted by two RuvA subunits (via domain III) on 2 adjacent RuvB subunits; this complex drives branch migration. In the full resolvosome a probable DNA-RuvA(4)-RuvB(12)-RuvC(2) complex forms which resolves the HJ.

The protein resides in the cytoplasm. In terms of biological role, the RuvA-RuvB-RuvC complex processes Holliday junction (HJ) DNA during genetic recombination and DNA repair, while the RuvA-RuvB complex plays an important role in the rescue of blocked DNA replication forks via replication fork reversal (RFR). RuvA specifically binds to HJ cruciform DNA, conferring on it an open structure. The RuvB hexamer acts as an ATP-dependent pump, pulling dsDNA into and through the RuvAB complex. HJ branch migration allows RuvC to scan DNA until it finds its consensus sequence, where it cleaves and resolves the cruciform DNA. The protein is Holliday junction branch migration complex subunit RuvA of Streptococcus pneumoniae serotype 19F (strain G54).